A 90-amino-acid chain; its full sequence is Mitochondrial import inner membrane translocase subunit tim10 (90 aa).

The Twin CX3C motif motif lies at 36–61 (CTLKCIDKSYREGDLSKGESVCLDRC). 2 disulfides stabilise this stretch: cysteine 36-cysteine 61 and cysteine 40-cysteine 57.

It belongs to the small Tim family. In terms of assembly, heterohexamer; composed of 3 copies of tim9 and 3 copies of tim10, named soluble 70 kDa complex. Associates directly with the TIM22 complex, whose core is composed of tim22 and tim54. Interacts with the transmembrane regions of multi-pass transmembrane proteins in transit.

It is found in the mitochondrion inner membrane. Functionally, mitochondrial intermembrane chaperone that participates in the import and insertion of multi-pass transmembrane proteins into the mitochondrial inner membrane. Also required for the transfer of beta-barrel precursors from the TOM complex to the sorting and assembly machinery (SAM complex) of the outer membrane. Acts as a chaperone-like protein that protects the hydrophobic precursors from aggregation and guide them through the mitochondrial intermembrane space. The protein is Mitochondrial import inner membrane translocase subunit tim10 (tim10) of Neurospora crassa (strain ATCC 24698 / 74-OR23-1A / CBS 708.71 / DSM 1257 / FGSC 987).